Consider the following 502-residue polypeptide: Probable cytosol aminopeptidase (502 aa).

Mn(2+) is bound by residues Lys-275 and Asp-280. The active site involves Lys-287. Asp-298, Asp-357, and Glu-359 together coordinate Mn(2+). Arg-361 is a catalytic residue.

It belongs to the peptidase M17 family. It depends on Mn(2+) as a cofactor.

It localises to the cytoplasm. It carries out the reaction Release of an N-terminal amino acid, Xaa-|-Yaa-, in which Xaa is preferably Leu, but may be other amino acids including Pro although not Arg or Lys, and Yaa may be Pro. Amino acid amides and methyl esters are also readily hydrolyzed, but rates on arylamides are exceedingly low.. The catalysed reaction is Release of an N-terminal amino acid, preferentially leucine, but not glutamic or aspartic acids.. In terms of biological role, presumably involved in the processing and regular turnover of intracellular proteins. Catalyzes the removal of unsubstituted N-terminal amino acids from various peptides. The sequence is that of Probable cytosol aminopeptidase from Ralstonia pickettii (strain 12J).